A 255-amino-acid polypeptide reads, in one-letter code: Imidazole glycerol phosphate synthase subunit HisF (255 aa).

Active-site residues include aspartate 11 and aspartate 130.

Belongs to the HisA/HisF family. In terms of assembly, heterodimer of HisH and HisF.

The protein localises to the cytoplasm. The catalysed reaction is 5-[(5-phospho-1-deoxy-D-ribulos-1-ylimino)methylamino]-1-(5-phospho-beta-D-ribosyl)imidazole-4-carboxamide + L-glutamine = D-erythro-1-(imidazol-4-yl)glycerol 3-phosphate + 5-amino-1-(5-phospho-beta-D-ribosyl)imidazole-4-carboxamide + L-glutamate + H(+). The protein operates within amino-acid biosynthesis; L-histidine biosynthesis; L-histidine from 5-phospho-alpha-D-ribose 1-diphosphate: step 5/9. IGPS catalyzes the conversion of PRFAR and glutamine to IGP, AICAR and glutamate. The HisF subunit catalyzes the cyclization activity that produces IGP and AICAR from PRFAR using the ammonia provided by the HisH subunit. This is Imidazole glycerol phosphate synthase subunit HisF from Campylobacter lari (strain RM2100 / D67 / ATCC BAA-1060).